Reading from the N-terminus, the 854-residue chain is Probable inactive serine/threonine-protein kinase DDB_G0274821 (854 aa).

Residues 1 to 266 (MPIKESFKRI…WPKLFIHPFF (266 aa)) form the Protein kinase domain. Residues Asn32 and Asn106 are each glycosylated (N-linked (GlcNAc...) asparagine). The disordered stretch occupies residues 116–135 (NNNNNNNNNNNNNNNNNNNN). N-linked (GlcNAc...) asparagine glycosylation is found at Asn163, Asn279, Asn283, and Asn290. Residues 289 to 331 (LNKSSSSSSSSSSSSSSSSSSSSSSSLSFQQQQQPNNISSPNL) form a disordered region. A compositionally biased stretch (low complexity) spans 292 to 322 (SSSSSSSSSSSSSSSSSSSSSSSLSFQQQQQ). N-linked (GlcNAc...) asparagine glycans are attached at residues Asn325, Asn347, and Asn365. The segment at 384 to 408 (IISPNRPSSPPLSSLSSCSSSSSSS) is disordered. N-linked (GlcNAc...) asparagine glycosylation is present at Asn414. The interval 425–446 (NNNNNNNNNNNNNNNNNNNNNN) is disordered. Residues Asn520, Asn541, and Asn620 are each glycosylated (N-linked (GlcNAc...) asparagine). Positions 627–650 (SSPPPSSSSSSSSPSSPSSTSPSL) are disordered. Low complexity predominate over residues 633–650 (SSSSSSSPSSPSSTSPSL). The N-linked (GlcNAc...) asparagine glycan is linked to Asn757. Residues 770–792 (HWRVQISFLNILFILITINNNFI) traverse the membrane as a helical segment.

It belongs to the protein kinase superfamily. Ser/Thr protein kinase family.

The protein resides in the membrane. The chain is Probable inactive serine/threonine-protein kinase DDB_G0274821 from Dictyostelium discoideum (Social amoeba).